A 605-amino-acid polypeptide reads, in one-letter code: DNA mismatch repair protein MutL (605 aa).

Belongs to the DNA mismatch repair MutL/HexB family.

In terms of biological role, this protein is involved in the repair of mismatches in DNA. It is required for dam-dependent methyl-directed DNA mismatch repair. May act as a 'molecular matchmaker', a protein that promotes the formation of a stable complex between two or more DNA-binding proteins in an ATP-dependent manner without itself being part of a final effector complex. The protein is DNA mismatch repair protein MutL of Sinorhizobium medicae (strain WSM419) (Ensifer medicae).